A 59-amino-acid polypeptide reads, in one-letter code: Large ribosomal subunit protein uL30 (59 aa).

Belongs to the universal ribosomal protein uL30 family. Part of the 50S ribosomal subunit.

The sequence is that of Large ribosomal subunit protein uL30 from Geotalea daltonii (strain DSM 22248 / JCM 15807 / FRC-32) (Geobacter daltonii).